The chain runs to 348 residues: Alcohol dehydrogenase 1 (348 aa).

Zn(2+) contacts are provided by C44, H67, C98, C101, C104, C112, and C154. NAD(+) contacts are provided by residues 178–184, D202, K207, 269–271, and R341; these read GACGGLG and VGL.

Belongs to the zinc-containing alcohol dehydrogenase family. Homotetramer. It depends on Zn(2+) as a cofactor.

The protein localises to the cytoplasm. It carries out the reaction a primary alcohol + NAD(+) = an aldehyde + NADH + H(+). It catalyses the reaction a secondary alcohol + NAD(+) = a ketone + NADH + H(+). The chain is Alcohol dehydrogenase 1 (ADH1) from Kluyveromyces marxianus (Yeast).